Here is a 384-residue protein sequence, read N- to C-terminus: 4-hydroxy-3-methylbut-2-en-1-yl diphosphate synthase (flavodoxin) (384 aa).

4 residues coordinate [4Fe-4S] cluster: C272, C275, C307, and E314.

The protein belongs to the IspG family. [4Fe-4S] cluster serves as cofactor.

It catalyses the reaction (2E)-4-hydroxy-3-methylbut-2-enyl diphosphate + oxidized [flavodoxin] + H2O + 2 H(+) = 2-C-methyl-D-erythritol 2,4-cyclic diphosphate + reduced [flavodoxin]. It functions in the pathway isoprenoid biosynthesis; isopentenyl diphosphate biosynthesis via DXP pathway; isopentenyl diphosphate from 1-deoxy-D-xylulose 5-phosphate: step 5/6. Its function is as follows. Converts 2C-methyl-D-erythritol 2,4-cyclodiphosphate (ME-2,4cPP) into 1-hydroxy-2-methyl-2-(E)-butenyl 4-diphosphate. In Rhodospirillum rubrum (strain ATCC 11170 / ATH 1.1.1 / DSM 467 / LMG 4362 / NCIMB 8255 / S1), this protein is 4-hydroxy-3-methylbut-2-en-1-yl diphosphate synthase (flavodoxin).